We begin with the raw amino-acid sequence, 453 residues long: Bifunctional protein GlmU (453 aa).

The pyrophosphorylase stretch occupies residues 1-225 (MNIVILAAGT…EWETLGVNSK (225 aa)). UDP-N-acetyl-alpha-D-glucosamine is bound by residues 6–9 (LAAG), lysine 20, glutamine 71, 76–77 (GT), 98–100 (YGD), glycine 135, glutamate 150, asparagine 165, and asparagine 223. Mg(2+) is bound at residue aspartate 100. Asparagine 223 is a binding site for Mg(2+). The tract at residues 226-246 (AQLAELERIHQRKLAEALLAD) is linker. Residues 247–453 (GVTLADPARI…GYVRPVKKKS (207 aa)) are N-acetyltransferase. UDP-N-acetyl-alpha-D-glucosamine contacts are provided by arginine 329 and lysine 347. Catalysis depends on histidine 359, which acts as the Proton acceptor. Tyrosine 362 and asparagine 373 together coordinate UDP-N-acetyl-alpha-D-glucosamine. Acetyl-CoA contacts are provided by residues alanine 376, 382–383 (NY), serine 401, and alanine 419.

This sequence in the N-terminal section; belongs to the N-acetylglucosamine-1-phosphate uridyltransferase family. The protein in the C-terminal section; belongs to the transferase hexapeptide repeat family. In terms of assembly, homotrimer. It depends on Mg(2+) as a cofactor.

The protein localises to the cytoplasm. It carries out the reaction alpha-D-glucosamine 1-phosphate + acetyl-CoA = N-acetyl-alpha-D-glucosamine 1-phosphate + CoA + H(+). It catalyses the reaction N-acetyl-alpha-D-glucosamine 1-phosphate + UTP + H(+) = UDP-N-acetyl-alpha-D-glucosamine + diphosphate. The protein operates within nucleotide-sugar biosynthesis; UDP-N-acetyl-alpha-D-glucosamine biosynthesis; N-acetyl-alpha-D-glucosamine 1-phosphate from alpha-D-glucosamine 6-phosphate (route II): step 2/2. Its pathway is nucleotide-sugar biosynthesis; UDP-N-acetyl-alpha-D-glucosamine biosynthesis; UDP-N-acetyl-alpha-D-glucosamine from N-acetyl-alpha-D-glucosamine 1-phosphate: step 1/1. It participates in bacterial outer membrane biogenesis; LPS lipid A biosynthesis. Its function is as follows. Catalyzes the last two sequential reactions in the de novo biosynthetic pathway for UDP-N-acetylglucosamine (UDP-GlcNAc). The C-terminal domain catalyzes the transfer of acetyl group from acetyl coenzyme A to glucosamine-1-phosphate (GlcN-1-P) to produce N-acetylglucosamine-1-phosphate (GlcNAc-1-P), which is converted into UDP-GlcNAc by the transfer of uridine 5-monophosphate (from uridine 5-triphosphate), a reaction catalyzed by the N-terminal domain. This Burkholderia thailandensis (strain ATCC 700388 / DSM 13276 / CCUG 48851 / CIP 106301 / E264) protein is Bifunctional protein GlmU.